A 382-amino-acid polypeptide reads, in one-letter code: Mannitol-1-phosphate 5-dehydrogenase (382 aa).

3–14 (ALHFGAGNIGRG) is a binding site for NAD(+).

The protein belongs to the mannitol dehydrogenase family.

The catalysed reaction is D-mannitol 1-phosphate + NAD(+) = beta-D-fructose 6-phosphate + NADH + H(+). The polypeptide is Mannitol-1-phosphate 5-dehydrogenase (Mannheimia succiniciproducens (strain KCTC 0769BP / MBEL55E)).